A 212-amino-acid polypeptide reads, in one-letter code: Large ribosomal subunit protein uL3 (212 aa).

N5-methylglutamine is present on Gln-153.

The protein belongs to the universal ribosomal protein uL3 family. Part of the 50S ribosomal subunit. Forms a cluster with proteins L14 and L19. Methylated by PrmB.

Its function is as follows. One of the primary rRNA binding proteins, it binds directly near the 3'-end of the 23S rRNA, where it nucleates assembly of the 50S subunit. This is Large ribosomal subunit protein uL3 from Acinetobacter baylyi (strain ATCC 33305 / BD413 / ADP1).